The chain runs to 541 residues: Cyclin-T1-4 (541 aa).

Positions 277–366 (VSEVESSVGG…KSRSGVEAPG (90 aa)) are disordered. Over residues 307–325 (SDNLGGSTKATQNRSNDNG) the composition is skewed to polar residues. Over residues 336–354 (QKGERDTETKDSMHTESHP) the composition is skewed to basic and acidic residues. Residue Ser396 is modified to Phosphoserine. The tract at residues 445-541 (EDDKDIQNKS…REPRRHSQER (97 aa)) is disordered. The span at 493 to 511 (MESPCEKQLGEGKRRHDNS) shows a compositional bias: basic and acidic residues. Residues 519–528 (KTNPGGSSHS) show a composition bias toward polar residues. A compositionally biased stretch (basic and acidic residues) spans 529 to 541 (YGDREPRRHSQER).

It belongs to the cyclin family. Cyclin T subfamily.

In Arabidopsis thaliana (Mouse-ear cress), this protein is Cyclin-T1-4 (CYCT1-4).